Reading from the N-terminus, the 124-residue chain is TP53-target gene 3 protein (124 aa).

Residues 1–11 show a composition bias toward polar residues; the sequence is MRASPCISQPA. Residues 1–42 are disordered; the sequence is MRASPCISQPAASWHPRPSALRPTAGSGPDTRTPGTVEDGSA.

Strongly expressed in testis. Weakly expressed in heart, placenta and skeletal muscle.

The protein localises to the cytoplasm. It localises to the nucleus. Its function is as follows. May play a significant role in p53/TP53-mediating signaling pathway. This is TP53-target gene 3 protein from Homo sapiens (Human).